We begin with the raw amino-acid sequence, 203 residues long: Small ribosomal subunit protein uS4 (203 aa).

Residues 93–156 form the S4 RNA-binding domain; it reads RRLDNVVYRL…MKVPAILEAV (64 aa).

This sequence belongs to the universal ribosomal protein uS4 family. Part of the 30S ribosomal subunit. Contacts protein S5. The interaction surface between S4 and S5 is involved in control of translational fidelity.

Functionally, one of the primary rRNA binding proteins, it binds directly to 16S rRNA where it nucleates assembly of the body of the 30S subunit. With S5 and S12 plays an important role in translational accuracy. This is Small ribosomal subunit protein uS4 from Streptococcus uberis (strain ATCC BAA-854 / 0140J).